Here is a 555-residue protein sequence, read N- to C-terminus: Urocanate hydratase (555 aa).

NAD(+) contacts are provided by residues 52–53, Gln-130, 176–178, Glu-196, Arg-201, 242–243, 263–267, 273–274, and Tyr-322; these read GG, GMG, NA, QTSAH, and YL. Residue Cys-410 is part of the active site. Gly-492 is an NAD(+) binding site.

It belongs to the urocanase family. NAD(+) serves as cofactor.

Its subcellular location is the cytoplasm. It carries out the reaction 4-imidazolone-5-propanoate = trans-urocanate + H2O. It participates in amino-acid degradation; L-histidine degradation into L-glutamate; N-formimidoyl-L-glutamate from L-histidine: step 2/3. Functionally, catalyzes the conversion of urocanate to 4-imidazolone-5-propionate. The protein is Urocanate hydratase of Shewanella baltica (strain OS155 / ATCC BAA-1091).